Reading from the N-terminus, the 111-residue chain is Prostatic steroid-binding protein C1 (111 aa).

The N-terminal stretch at 1–23 (MSTIKLSLCLLIMLAVCCYEANA) is a signal peptide.

Belongs to the secretoglobin family. Lipophilin subfamily. In terms of assembly, prostatein is composed of three different peptides called C1, C2 and C3. These form covalent C1:C3 (F) and C2:C3 (S) heterodimers whose noncovalent association forms tetrameric (C1:C3/C3:C2) prostatein molecules.

It localises to the secreted. Its function is as follows. Part of prostatein which is the major secretory glycoprotein of ventral prostate gland. The protein is Prostatic steroid-binding protein C1 (Psbpc1) of Rattus norvegicus (Rat).